Here is a 524-residue protein sequence, read N- to C-terminus: MAVSNASVVLSPNLETSSSWYHHNPSSSLDLIRIHTLPMNKMTRRGLIQRVRCETSPSSDSSPLDKLKNSPAIDRYTRERSSIVVIGLSFHTSPLEMRERLAIPEAEWPLAITQLCALNHIEEAAVLSTCNRIEIYVSALSRYRGVKEVTEWMSKRSGIPVSDICQHRFLLYNKDATQHLFQVSAGLESLVIGENQIQSQVRKAEQVVKQEGFGRIISTLFEKANKAGKRVRAQTNIASGAVSVSSAAVELALTKLPGSVSSAMMLVIGAGEMGKRIIEHLVAKGCTKMVVMNRSEDKVAAIRKEMQSGVEIIYKPLDEILACAAEANVIFTSTSSETPLFLKEHVEILPPCPADYARLFVDISVPRNVGSCVAELDSARVYNVDDLKEVVAANKEDRARKSMEALPIIREETIEFEGWRDSLQTFPTIRKLRSKTERIRAECVEKLISKHGNGMDKKTREAVEKQTRIIVNNILDYPMKHLRYDGTGSSKLRETLENMQAVNRIYELDGELLEEKIREKKDKK.

A chloroplast-targeting transit peptide spans 1-52 (MAVSNASVVLSPNLETSSSWYHHNPSSSLDLIRIHTLPMNKMTRRGLIQRVR). Substrate contacts are provided by residues 129–132 (TCNR), Ser-189, 194–196 (ENQ), and Gln-200. Catalysis depends on Cys-130, which acts as the Nucleophile. 269-274 (GAGEMG) is an NADP(+) binding site.

This sequence belongs to the glutamyl-tRNA reductase family.

It localises to the plastid. The protein resides in the chloroplast. It carries out the reaction (S)-4-amino-5-oxopentanoate + tRNA(Glu) + NADP(+) = L-glutamyl-tRNA(Glu) + NADPH + H(+). Its pathway is porphyrin-containing compound metabolism; protoporphyrin-IX biosynthesis; 5-aminolevulinate from L-glutamyl-tRNA(Glu): step 1/2. It functions in the pathway porphyrin-containing compound metabolism; chlorophyll biosynthesis. Its function is as follows. Catalyzes the NADPH-dependent reduction of glutamyl-tRNA(Glu) to glutamate 1-semialdehyde (GSA). The sequence is that of Probable glutamyl-tRNA reductase 3, chloroplastic (HEMA3) from Arabidopsis thaliana (Mouse-ear cress).